A 340-amino-acid polypeptide reads, in one-letter code: Guanine nucleotide-binding protein G(I)/G(S)/G(T) subunit beta-3 (340 aa).

7 WD repeats span residues 53-83 (GHLA…IVWD), 95-125 (LRSS…SIYS), 141-170 (AHTG…ALWD), 182-212 (GHTG…KLWD), 224-254 (GHES…RLFD), 268-298 (SIIC…NIWD), and 310-340 (GHDN…KVWN).

The protein belongs to the WD repeat G protein beta family. G proteins are composed of 3 units, alpha, beta and gamma. Interacts with RASD2.

It is found in the cytoplasm. The protein localises to the perinuclear region. Its function is as follows. Guanine nucleotide-binding proteins (G proteins) are involved as a modulator or transducer in various transmembrane signaling systems. The beta and gamma chains are required for the GTPase activity, for replacement of GDP by GTP, and for G protein-effector interaction. This Canis lupus familiaris (Dog) protein is Guanine nucleotide-binding protein G(I)/G(S)/G(T) subunit beta-3 (GNB3).